We begin with the raw amino-acid sequence, 179 residues long: FADH(2)-dependent resorcinol hydroxylase, reductase component (179 aa).

The protein belongs to the non-flavoprotein flavin reductase family. In terms of assembly, the FADH(2)-dependent resorcinol hydroxylase is composed of two subunits, GraA (the oxygenase component) and GraD (the reductase component). Both subunits are required for activity.

The catalysed reaction is FADH2 + NAD(+) = FAD + NADH + 2 H(+). It participates in aromatic compound metabolism. Its function is as follows. Involved in the gamma-resorcylate (2,6-dihydroxybenzoate) catabolism. Reductase component of the resorcinol hydroxylase, which catalyzes the FADPH-dependent conversion of resorcinol to hydroxyquinol. Catalyzes the reduction of FAD by NADH. The reduced flavin is then transferred to the oxygenase component GraA. This chain is FADH(2)-dependent resorcinol hydroxylase, reductase component, found in Rhizobium sp. (strain MTP-10005).